The primary structure comprises 227 residues: Mediator of RNA polymerase II transcription subunit 6 (227 aa).

Polar residues predominate over residues 149–162 (PSQGYTYEDSQLTT). Disordered regions lie at residues 149–172 (PSQG…TPQA) and 204–227 (QSES…PLKK).

The protein belongs to the Mediator complex subunit 6 family. Component of the Mediator complex.

Its subcellular location is the nucleus. In terms of biological role, component of the Mediator complex, a coactivator involved in the regulated transcription of nearly all RNA polymerase II-dependent genes. Mediator functions as a bridge to convey information from gene-specific regulatory proteins to the basal RNA polymerase II transcription machinery. Mediator is recruited to promoters by direct interactions with regulatory proteins and serves as a scaffold for the assembly of a functional preinitiation complex with RNA polymerase II and the general transcription factors. The sequence is that of Mediator of RNA polymerase II transcription subunit 6 (MED6) from Yarrowia lipolytica (strain CLIB 122 / E 150) (Yeast).